We begin with the raw amino-acid sequence, 521 residues long: Two-component response regulator ARR11 (521 aa).

The 116-residue stretch at Arg-12–Leu-127 folds into the Response regulatory domain. Asp-63 carries the 4-aspartylphosphate modification. The Nuclear localization signal motif lies at Lys-192–Arg-195. Positions Arg-195 to Arg-246 form a DNA-binding region, myb-like GARP.

This sequence belongs to the ARR family. Type-B subfamily. Binds the target DNA as a monomer. In terms of processing, two-component system major event consists of a His-to-Asp phosphorelay between a sensor histidine kinase (HK) and a response regulator (RR). In plants, the His-to-Asp phosphorelay involves an additional intermediate named Histidine-containing phosphotransfer protein (HPt). This multistep phosphorelay consists of a His-Asp-His-Asp sequential transfer of a phosphate group between first a His and an Asp of the HK protein, followed by the transfer to a conserved His of the HPt protein and finally the transfer to an Asp in the receiver domain of the RR protein. In terms of tissue distribution, detected in the whole plant. Predominantly expressed in roots and stems.

The protein resides in the nucleus. Functionally, transcriptional activator that binds specifically to the DNA sequence 5'-[AG]GATT-3'. Functions as a response regulator involved in His-to-Asp phosphorelay signal transduction system. Phosphorylation of the Asp residue in the receiver domain activates the ability of the protein to promote the transcription of target genes. Could directly activate some type-A response regulators in response to cytokinins. This is Two-component response regulator ARR11 (ARR11) from Arabidopsis thaliana (Mouse-ear cress).